The sequence spans 286 residues: 4-diphosphocytidyl-2-C-methyl-D-erythritol kinase (286 aa).

Residue Lys10 is part of the active site. 94–104 (PVAAGLAGGSS) contacts ATP. Asp136 is a catalytic residue.

The protein belongs to the GHMP kinase family. IspE subfamily.

It catalyses the reaction 4-CDP-2-C-methyl-D-erythritol + ATP = 4-CDP-2-C-methyl-D-erythritol 2-phosphate + ADP + H(+). The protein operates within isoprenoid biosynthesis; isopentenyl diphosphate biosynthesis via DXP pathway; isopentenyl diphosphate from 1-deoxy-D-xylulose 5-phosphate: step 3/6. In terms of biological role, catalyzes the phosphorylation of the position 2 hydroxy group of 4-diphosphocytidyl-2C-methyl-D-erythritol. The protein is 4-diphosphocytidyl-2-C-methyl-D-erythritol kinase of Exiguobacterium sibiricum (strain DSM 17290 / CCUG 55495 / CIP 109462 / JCM 13490 / 255-15).